Consider the following 190-residue polypeptide: Peptidyl-tRNA hydrolase (190 aa).

Tyrosine 18 contributes to the tRNA binding site. The Proton acceptor role is filled by histidine 23. Positions 69, 71, and 117 each coordinate tRNA.

Belongs to the PTH family. Monomer.

Its subcellular location is the cytoplasm. It catalyses the reaction an N-acyl-L-alpha-aminoacyl-tRNA + H2O = an N-acyl-L-amino acid + a tRNA + H(+). Its function is as follows. Hydrolyzes ribosome-free peptidyl-tRNAs (with 1 or more amino acids incorporated), which drop off the ribosome during protein synthesis, or as a result of ribosome stalling. Functionally, catalyzes the release of premature peptidyl moieties from peptidyl-tRNA molecules trapped in stalled 50S ribosomal subunits, and thus maintains levels of free tRNAs and 50S ribosomes. In Rhodococcus jostii (strain RHA1), this protein is Peptidyl-tRNA hydrolase.